Consider the following 453-residue polypeptide: Phosphatidylserine decarboxylase proenzyme 1, mitochondrial (453 aa).

The transit peptide at 1 to 29 (MKPRFPQNVYFLARYSYLRRFQHSQRRTF) directs the protein to the mitochondrion. The Mitochondrial matrix portion of the chain corresponds to 30–74 (SSFLNNIRSNYSGARASPLGGSSGAGAGAGGGGTGDSKGNAFLVP). A helical transmembrane segment spans residues 75 to 93 (GATMATILMLGALHARRLY). Topologically, residues 94 to 453 (EDKKIEEKRE…GQALGRWKEE (360 aa)) are mitochondrial intermembrane. Catalysis depends on charge relay system; for autoendoproteolytic cleavage activity residues Asp-199, His-296, and Ser-408. Ser-408 (schiff-base intermediate with substrate; via pyruvic acid; for decarboxylase activity) is an active-site residue. The residue at position 408 (Ser-408) is a Pyruvic acid (Ser); by autocatalysis.

Belongs to the phosphatidylserine decarboxylase family. PSD-B subfamily. Eukaryotic type I sub-subfamily. In terms of assembly, heterodimer of a large membrane-associated beta subunit and a small pyruvoyl-containing alpha subunit. Pyruvate serves as cofactor. In terms of processing, is synthesized initially as an inactive proenzyme. Formation of the active enzyme involves a self-maturation process in which the active site pyruvoyl group is generated from an internal serine residue via an autocatalytic post-translational modification. Two non-identical subunits are generated from the proenzyme in this reaction, and the pyruvate is formed at the N-terminus of the alpha chain, which is derived from the carboxyl end of the proenzyme. The autoendoproteolytic cleavage occurs by a canonical serine protease mechanism, in which the side chain hydroxyl group of the serine supplies its oxygen atom to form the C-terminus of the beta chain, while the remainder of the serine residue undergoes an oxidative deamination to produce ammonia and the pyruvoyl prosthetic group on the alpha chain. During this reaction, the Ser that is part of the protease active site of the proenzyme becomes the pyruvoyl prosthetic group, which constitutes an essential element of the active site of the mature decarboxylase. As to expression, expressed in roots, leaves, stems and flowers.

The protein localises to the mitochondrion. It localises to the mitochondrion inner membrane. The enzyme catalyses a 1,2-diacyl-sn-glycero-3-phospho-L-serine + H(+) = a 1,2-diacyl-sn-glycero-3-phosphoethanolamine + CO2. It participates in phospholipid metabolism; phosphatidylethanolamine biosynthesis; phosphatidylethanolamine from CDP-diacylglycerol: step 2/2. Functionally, catalyzes the formation of phosphatidylethanolamine (PtdEtn) from phosphatidylserine (PtdSer). Plays a central role in phospholipid metabolism and in the interorganelle trafficking of phosphatidylserine. Contributes only to a minor proportion of PtdEtn production. The protein is Phosphatidylserine decarboxylase proenzyme 1, mitochondrial (PSD1) of Arabidopsis thaliana (Mouse-ear cress).